Reading from the N-terminus, the 94-residue chain is Putative RNA-binding protein RbpD (94 aa).

Residues 2–79 form the RRM domain; sequence TIYVGNLSYR…RQLRVNKAKP (78 aa). Residues 73–94 are disordered; that stretch reads RVNKAKPREDDRRGSWGKKQDY. Residues 78-94 show a composition bias toward basic and acidic residues; it reads KPREDDRRGSWGKKQDY.

The chain is Putative RNA-binding protein RbpD (rbpD) from Nostoc sp. (strain PCC 7120 / SAG 25.82 / UTEX 2576).